Reading from the N-terminus, the 246-residue chain is MSELLLGVNVDHIATLRQARGTNYPDPVYAASVAEHAGADGITVHLREDRRHIQDRDIHVLKQTLHTRMNFEMAVTDEMIAIACDVKPVFCCLVPEKREELTTEGGLDVVGQLDKITKATEQLTAAGIAVSLFIDADKAQIDAAVASKAPYIEIHTGHYADLSSEEEQLIELERLTVGIKYAHNLGLKVNAGHGLNYFNVKPIAAIKEIIELNIGHAIIARAAIDGLDKAVRDMKQLMLEARTYNT.

Asn9 contributes to the 3-amino-2-oxopropyl phosphate binding site. 11–12 (DH) contacts 1-deoxy-D-xylulose 5-phosphate. Arg20 serves as a coordination point for 3-amino-2-oxopropyl phosphate. The active-site Proton acceptor is His45. 1-deoxy-D-xylulose 5-phosphate contacts are provided by Arg47 and His52. The Proton acceptor role is filled by Glu72. Thr102 is a 1-deoxy-D-xylulose 5-phosphate binding site. The active-site Proton donor is His193. Residues Gly194 and 215-216 (GH) contribute to the 3-amino-2-oxopropyl phosphate site.

It belongs to the PNP synthase family. As to quaternary structure, homooctamer; tetramer of dimers.

It is found in the cytoplasm. It carries out the reaction 3-amino-2-oxopropyl phosphate + 1-deoxy-D-xylulose 5-phosphate = pyridoxine 5'-phosphate + phosphate + 2 H2O + H(+). It participates in cofactor biosynthesis; pyridoxine 5'-phosphate biosynthesis; pyridoxine 5'-phosphate from D-erythrose 4-phosphate: step 5/5. In terms of biological role, catalyzes the complicated ring closure reaction between the two acyclic compounds 1-deoxy-D-xylulose-5-phosphate (DXP) and 3-amino-2-oxopropyl phosphate (1-amino-acetone-3-phosphate or AAP) to form pyridoxine 5'-phosphate (PNP) and inorganic phosphate. This Colwellia psychrerythraea (strain 34H / ATCC BAA-681) (Vibrio psychroerythus) protein is Pyridoxine 5'-phosphate synthase.